Reading from the N-terminus, the 289-residue chain is Oxaloacetate decarboxylase (289 aa).

Substrate is bound at residue serine 47. Mg(2+) is bound at residue aspartate 85. Substrate is bound by residues arginine 156 and histidine 232.

This sequence belongs to the isocitrate lyase/PEP mutase superfamily. Oxaloacetate decarboxylase family. In terms of assembly, homotetramer; dimer of dimers. Mg(2+) is required as a cofactor.

The enzyme catalyses oxaloacetate + H(+) = pyruvate + CO2. Catalyzes the decarboxylation of oxaloacetate into pyruvate. Seems to play a role in maintaining cellular concentrations of bicarbonate and pyruvate. This is Oxaloacetate decarboxylase from Rhodopseudomonas palustris (strain BisB5).